The chain runs to 228 residues: Endo-1,4-beta-xylanase A (228 aa).

The first 27 residues, 1-27 (MNLRKLRLLFVMCIGLTLILTAVPAHA), serve as a signal peptide directing secretion. A GH11 domain is found at 29-222 (TITNNEMGNH…SSGSANVMTN (194 aa)). Glu-120 (nucleophile) is an active-site residue. Glu-209 (proton donor) is an active-site residue.

The protein belongs to the glycosyl hydrolase 11 (cellulase G) family.

It catalyses the reaction Endohydrolysis of (1-&gt;4)-beta-D-xylosidic linkages in xylans.. It participates in glycan degradation; xylan degradation. The chain is Endo-1,4-beta-xylanase A (xynA) from Bacillus pumilus (Bacillus mesentericus).